The chain runs to 698 residues: MQPTATMATAAATTATVALTTSWDNATSRPTAEPDPILDNYVLLVVVMSLFVGGTLVVLSGVLLLCKRCWEVHQRFNRAMEEAEKTTTTYLDNGTHPIQDPDCRGEDPEGQDTETERFLATSSTGRRVSFNEAALFEQSRKAQDKGRRYTLTEGDFHHLKNARLTHLHLPPLKIATIHECDSGEASAAATPHPATTSKDSLAIFQPPGKTLTGHSVGPSSALPGGPYNSVDFSEISPSTSSDSGEGISLDAGTRGAKAAGPETVPGEMGTGSSGSGTVLQFFTRLRRHASLDGASPYFKVKKWKLEPSQRASSLDTRGSPKRHHFQRQRAASESMEQEGDVPHADFIQYIASAGDSVAFPPPRPFLASPTSPPPTLGRLEAAEAAGGASPETPPEHGISLGPEHAQQQDPQQEQDAEHAQCSYRDLWSLRASLELHAATASDHSSSGNDRDSVRSGDSSGSGSGGGGAAPAFPPPPESPPALRPKDGEARRLLQMDSGYASIEGRGAGDEVSELPAPARSPPRSPRAWPRRPRRDYSIDEKTDALFHEFLRHDPHFDDAPRHRTRAHPHTHARKQWQQRGRQHSDPGGARAATPPGVARPTRAPLRRGDSVDCPPEGRALPITGDDPSIPVIEEEPGGGGGGCPGSGLCVEPAGALLDKLAASLDERLFSPRLAEPVASSQVLIVAAAAPTSPDHSPA.

Residues 1-41 (MQPTATMATAAATTATVALTTSWDNATSRPTAEPDPILDNY) are Extracellular-facing. The N-linked (GlcNAc...) asparagine glycan is linked to asparagine 25. A helical; Signal-anchor for type III membrane protein membrane pass occupies residues 42 to 62 (VLLVVVMSLFVGGTLVVLSGV). Residues 63-698 (LLLCKRCWEV…APTSPDHSPA (636 aa)) lie on the Cytoplasmic side of the membrane. 2 disordered regions span residues 90–124 (YLDN…TSST) and 185–275 (ASAA…SSGS). Over residues 185–197 (ASAAATPHPATTS) the composition is skewed to low complexity. 2 positions are modified to phosphoserine: serine 290 and serine 295. Disordered stretches follow at residues 308–339 (SQRA…EQEG), 360–421 (PPPR…HAQC), 438–536 (ATAS…RRDY), and 554–648 (PHFD…GSGL). Positions 360–375 (PPPRPFLASPTSPPPT) are enriched in pro residues. The segment covering 402 to 413 (PEHAQQQDPQQE) has biased composition (low complexity). Residues 459 to 468 (SGSGSGGGGA) show a composition bias toward gly residues. Positions 471–482 (AFPPPPESPPAL) are enriched in pro residues. Residues 483–493 (RPKDGEARRLL) are compositionally biased toward basic and acidic residues. A phosphoserine mark is found at serine 501, serine 520, and serine 524. The segment covering 562–576 (HRTRAHPHTHARKQW) has biased composition (basic residues). Serine 610 carries the post-translational modification Phosphoserine. Threonine 691 is modified (phosphothreonine). Phosphoserine occurs at positions 692 and 696.

As to quaternary structure, interacts with voltage-dependent calcium channels CACNB1, CACNB2, CACNB3 and CACNB4 beta subunits; prevents their interaction with the CACNA1C alpha subunit thereby negatively regulating the activity of the corresponding calcium channels. In terms of tissue distribution, expressed by neurons in the cortex, cerebellum and hippocampus and by pancreatic beta cells (at protein level).

The protein resides in the cytoplasmic vesicle. Its subcellular location is the secretory vesicle. The protein localises to the synaptic vesicle membrane. It localises to the cell membrane. It is found in the cell projection. The protein resides in the growth cone. In terms of biological role, negatively regulates voltage-gated calcium channels by preventing the interaction between their alpha and beta subunits. Thereby, negatively regulates calcium channels activity at the plasma membrane and indirectly inhibits calcium-regulated exocytosis. The protein is Voltage-dependent calcium channel beta subunit-associated regulatory protein of Mus musculus (Mouse).